Here is a 116-residue protein sequence, read N- to C-terminus: Large ribosomal subunit protein bL17 (116 aa).

It belongs to the bacterial ribosomal protein bL17 family. In terms of assembly, part of the 50S ribosomal subunit. Contacts protein L32.

The sequence is that of Large ribosomal subunit protein bL17 from Nostoc punctiforme (strain ATCC 29133 / PCC 73102).